The following is a 1043-amino-acid chain: Glutamate receptor ionotropic, NMDA 3B (1043 aa).

The signal sequence occupies residues 1-22 (MEFVRALWLGLALALGPGSAGG). Topologically, residues 23 to 574 (HPQPCGVLAR…PIGAFMWPLH (552 aa)) are extracellular. Asparagine 69, asparagine 344, asparagine 451, and asparagine 465 each carry an N-linked (GlcNAc...) asparagine glycan. 2 disulfides stabilise this stretch: cysteine 439–cysteine 475 and cysteine 445–cysteine 476. Residues serine 531, serine 533, and arginine 538 each coordinate glycine. Residues serine 533 and arginine 538 each coordinate D-serine. The chain crosses the membrane as a helical span at residues 575-594 (WSTWLGVFAALHLTALFLTV). The Cytoplasmic segment spans residues 595–615 (YEWRSPYGLTPRGRNRSTVFS). Residues 616–627 (YSSALNLCYAIL) constitute an intramembrane region (discontinuously helical). At 628-641 (FRRTVSSKTPKCPT) the chain is on the cytoplasmic side. The chain crosses the membrane as a helical span at residues 642-661 (GRLLMNLWAIFCLLVLSSYT). The Extracellular portion of the chain corresponds to 662–832 (ANLAAVMVGD…TLQMSIYHFA (171 aa)). Serine 701 is a binding site for glycine. D-serine-binding residues include serine 701, alanine 702, and aspartate 745. Aspartate 745 contributes to the glycine binding site. N-linked (GlcNAc...) asparagine glycosylation occurs at asparagine 786. The chain crosses the membrane as a helical span at residues 833–848 (GLFVLLCLGLGSALLS). Residues 849–1043 (SLGEHAFFRL…PHSGRPGSQE (195 aa)) are Cytoplasmic-facing. Disordered stretches follow at residues 882 to 924 (ALNT…WKRA) and 1012 to 1043 (GDSARHRPRRLLQARAAPAEAPPHSGRPGSQE). Positions 979-1012 (QPGELQELERRIEVARERLRQALVRRGQLLAQLG) are involved in the trafficking and surface expression of NMDARs. Positions 1024–1035 (QARAAPAEAPPH) are enriched in low complexity.

The protein belongs to the glutamate-gated ion channel (TC 1.A.10.1) family. NR3B/GRIN3B subfamily. In terms of assembly, forms heterotetrameric channels that contain at least two GluN1 subunits and at least a combination of one GluN2 and one GluN3 subunits (in vitro). Forms heterotetrameric channels composed of two GluN1/zeta subunits (GRIN1), and two identical GluN3 subunits (GRIN3A or GRIN3B) (in vitro). Does not form functional homomeric channels.

It localises to the cell membrane. The protein localises to the postsynaptic cell membrane. The catalysed reaction is Ca(2+)(in) = Ca(2+)(out). The enzyme catalyses Na(+)(in) = Na(+)(out). Component of a non-conventional N-methyl-D-aspartate (NMDA) receptors (NMDARs) that function as heterotetrameric, ligand-gated cation channels with low calcium permeability and low voltage-dependent block by Mg(2+). Forms glutamatergic receptor complexes with GluN1 and GluN2 subunits which are activated by glycine binding to the GluN1 and GluN3 subunits and L-glutamate binding to GluN2 subunits. Forms excitatory glycinergic receptor complexes with GluN1 alone which are activated by glycine binding to the GluN1 and GluN3 subunits. GluN3B subunit also binds D-serine and, in the absence of glycine, activates glycinergic receptor complexes, but with lower efficacy than glycine. Each GluN3 subunit confers differential attributes to channel properties, including activation, deactivation and desensitization kinetics, pH sensitivity, Ca2(+) permeability, and binding to allosteric modulators. The polypeptide is Glutamate receptor ionotropic, NMDA 3B (Homo sapiens (Human)).